The sequence spans 302 residues: MTSGYYTVSFFYAILLLCACTRAEIYLTGGESQGLPSGFWQMDDDLAIAPVSMVEFYQTIGLTANGTVPESFNKRDATEYPNIISNITTQAANFTQHSLVEQLQNDVTAISISNAINVAVDGSVETPADLQYNRNQETGESTLCRAKFYGVEVRTWSRLYNRAVSSTTLTTNLNSYIAQWVAWAVHGSGDKKFCGSQEFTNIFFDGQEGWSLFVKTWSTNSSCDITASEGNLTCAVRVSVSSMHNHGKTAFCVTYSHGDSWRAELRVVANDAWSHYYPWSIDCPEVDKNNMAINDCFDQAQG.

Residues 1–23 (MTSGYYTVSFFYAILLLCACTRA) form the signal peptide. N-linked (GlcNAc...) asparagine glycans are attached at residues N65, N86, N93, N220, and N231.

This sequence to yeast killer toxin KHR.

This is an uncharacterized protein from Saccharomyces cerevisiae (strain ATCC 204508 / S288c) (Baker's yeast).